A 78-amino-acid chain; its full sequence is ATP synthase subunit c (78 aa).

2 consecutive transmembrane segments (helical) span residues Ala-9–Trp-29 and Ala-56–Val-76.

The protein belongs to the ATPase C chain family. F-type ATPases have 2 components, F(1) - the catalytic core - and F(0) - the membrane proton channel. F(1) has five subunits: alpha(3), beta(3), gamma(1), delta(1), epsilon(1). F(0) has three main subunits: a(1), b(2) and c(10-14). The alpha and beta chains form an alternating ring which encloses part of the gamma chain. F(1) is attached to F(0) by a central stalk formed by the gamma and epsilon chains, while a peripheral stalk is formed by the delta and b chains.

Its subcellular location is the cell membrane. Functionally, f(1)F(0) ATP synthase produces ATP from ADP in the presence of a proton or sodium gradient. F-type ATPases consist of two structural domains, F(1) containing the extramembraneous catalytic core and F(0) containing the membrane proton channel, linked together by a central stalk and a peripheral stalk. During catalysis, ATP synthesis in the catalytic domain of F(1) is coupled via a rotary mechanism of the central stalk subunits to proton translocation. Its function is as follows. Key component of the F(0) channel; it plays a direct role in translocation across the membrane. A homomeric c-ring of between 10-14 subunits forms the central stalk rotor element with the F(1) delta and epsilon subunits. The protein is ATP synthase subunit c of Malacoplasma penetrans (strain HF-2) (Mycoplasma penetrans).